The sequence spans 374 residues: tRNA-specific 2-thiouridylase MnmA (374 aa).

ATP contacts are provided by residues 12–19 (GMSGGVDS) and methionine 38. An interaction with target base in tRNA region spans residues 98–100 (NPD). Cysteine 103 acts as the Nucleophile in catalysis. Residues cysteine 103 and cysteine 202 are joined by a disulfide bond. ATP is bound at residue glycine 128. Residues 152–154 (KDQ) are interaction with tRNA. Cysteine 202 functions as the Cysteine persulfide intermediate in the catalytic mechanism. The tract at residues 316-317 (RY) is interaction with tRNA.

Belongs to the MnmA/TRMU family.

Its subcellular location is the cytoplasm. It carries out the reaction S-sulfanyl-L-cysteinyl-[protein] + uridine(34) in tRNA + AH2 + ATP = 2-thiouridine(34) in tRNA + L-cysteinyl-[protein] + A + AMP + diphosphate + H(+). In terms of biological role, catalyzes the 2-thiolation of uridine at the wobble position (U34) of tRNA, leading to the formation of s(2)U34. In Vibrio campbellii (strain ATCC BAA-1116), this protein is tRNA-specific 2-thiouridylase MnmA.